The sequence spans 195 residues: Transcriptional regulator LdrP (195 aa).

The region spanning 110 to 182 is the HTH crp-type domain; it reads GELRARIARY…YRRVYLLDLA (73 aa). Positions 142-161 form a DNA-binding region, H-T-H motif; that stretch reads HEEIADATASIRESVSKVLA.

As to quaternary structure, homodimer.

Functionally, activates transcription. Positively regulates PcrtB promoter upstream of the crtB operon in a cAMP-independent manner. Regulated genes include genes encoding DNA photolyase, phytoene synthase and cytochrome P450 monooxygenase, which are involved in carotenoid biosynthesis. Positively regulates the light-inducible gene cluster in the megaplasmid in a cAMP-independent manner. This chain is Transcriptional regulator LdrP, found in Thermus thermophilus (strain ATCC 27634 / DSM 579 / HB8).